A 261-amino-acid polypeptide reads, in one-letter code: Segregation and condensation protein A (261 aa).

Belongs to the ScpA family. As to quaternary structure, component of a cohesin-like complex composed of ScpA, ScpB and the Smc homodimer, in which ScpA and ScpB bind to the head domain of Smc. The presence of the three proteins is required for the association of the complex with DNA.

The protein resides in the cytoplasm. In terms of biological role, participates in chromosomal partition during cell division. May act via the formation of a condensin-like complex containing Smc and ScpB that pull DNA away from mid-cell into both cell halves. In Ligilactobacillus salivarius (strain UCC118) (Lactobacillus salivarius), this protein is Segregation and condensation protein A.